The sequence spans 328 residues: Global transcription regulator sge1 (328 aa).

Disordered stretches follow at residues 94-120 (PGEK…PRQR) and 251-293 (QMHQ…QYVH). Composition is skewed to low complexity over residues 106–116 (KSTTQSGGISK), 251–261 (QMHQPQVHQPL), and 282–293 (AHQPQVHQQYVH).

The protein belongs to the MIT1/WOR1 family.

It localises to the nucleus. Functionally, global transcriptional regulator of transcription that impacts, but is not absolutely required for secondary metabolism and pathogenicity on maize. Regulates synthesis of multiple secondary metabolites, including fumonisins and fusarins. This Gibberella moniliformis (strain M3125 / FGSC 7600) (Maize ear and stalk rot fungus) protein is Global transcription regulator sge1.